Reading from the N-terminus, the 430-residue chain is Trigger factor (430 aa).

The PPIase FKBP-type domain occupies 163–248 (GDVVDVDYKG…LNSIKTSILP (86 aa)).

This sequence belongs to the FKBP-type PPIase family. Tig subfamily.

Its subcellular location is the cytoplasm. It catalyses the reaction [protein]-peptidylproline (omega=180) = [protein]-peptidylproline (omega=0). Functionally, involved in protein export. Acts as a chaperone by maintaining the newly synthesized protein in an open conformation. Functions as a peptidyl-prolyl cis-trans isomerase. This is Trigger factor from Lawsonia intracellularis (strain PHE/MN1-00).